Reading from the N-terminus, the 327-residue chain is COP9 signalosome complex subunit 5 (327 aa).

An MPN domain is found at 52–189; sequence IKISALALLK…LGAFRTYPKG (138 aa). The Zn(2+) site is built by His-135, His-137, and Asp-148. The short motif at 135 to 148 is the JAMM motif element; the sequence is HSHPGYGCWLSGID. A phosphoserine mark is found at Ser-300 and Ser-302. A Phosphothreonine modification is found at Thr-303.

It belongs to the peptidase M67A family. CSN5 subfamily. In terms of assembly, component of the CSN complex, probably composed of CSN1b, alien/CSN2, CSN3, CSN4, CSN5, CSN6, CSN7 and CSN8. Interacts directly with CSN2. Also exists as monomeric form. Interacts via its MPN domain with Trc8. Requires a divalent metal cation as cofactor. As to expression, expressed in the optic lobe neuropil.

It localises to the cytoplasm. The protein localises to the nucleus. In terms of biological role, probable protease subunit of the COP9 signalosome complex (CSN), a complex involved in various cellular and developmental processes. The CSN complex is an essential regulator of the ubiquitin (Ubl) conjugation pathway by mediating the deneddylation of the cullin subunits of the SCF-type E3 ligase complexes, leading to decrease the Ubl ligase activity of SCF. In the complex, it probably acts as the catalytic center that mediates the cleavage of Nedd8 from cullins. It however has no metalloprotease activity by itself and requires the other subunits of the CSN complex. The CSN complex plays an essential role in oogenesis and embryogenesis and is required for proper photoreceptor R cell differentiation and promote lamina glial cell migration or axon targeting. It also promotes Ubl-dependent degradation of cyclin E (CycE) during early oogenesis. Also involved in regulation of axis formation by checkpoint-dependent, translational control of Gurken. The chain is COP9 signalosome complex subunit 5 (CSN5) from Drosophila melanogaster (Fruit fly).